Here is a 107-residue protein sequence, read N- to C-terminus: uncharacterized protein (107 aa).

This is an uncharacterized protein from Saccharomyces cerevisiae (strain ATCC 204508 / S288c) (Baker's yeast).